An 884-amino-acid polypeptide reads, in one-letter code: Alanine--tRNA ligase (884 aa).

Zn(2+) contacts are provided by His572, His576, Cys673, and His677.

The protein belongs to the class-II aminoacyl-tRNA synthetase family. Requires Zn(2+) as cofactor.

It is found in the cytoplasm. It carries out the reaction tRNA(Ala) + L-alanine + ATP = L-alanyl-tRNA(Ala) + AMP + diphosphate. Its function is as follows. Catalyzes the attachment of alanine to tRNA(Ala) in a two-step reaction: alanine is first activated by ATP to form Ala-AMP and then transferred to the acceptor end of tRNA(Ala). Also edits incorrectly charged Ser-tRNA(Ala) and Gly-tRNA(Ala) via its editing domain. The sequence is that of Alanine--tRNA ligase from Xylella fastidiosa (strain M23).